Here is a 502-residue protein sequence, read N- to C-terminus: Xyloglucan-specific endo-beta-1,4-glucanase BoGH5A (502 aa).

A signal peptide spans 1-32 (MEKQSFSDGLFSPLGIKRVIFMLVLLTTSFIS). The N-palmitoyl cysteine moiety is linked to residue C33. Residue C33 is the site of S-diacylglycerol cysteine attachment. The region spanning 67-127 (GPAEWHISTS…PDIIINVKQS (61 aa)) is the BACON domain. Residues N165, V172, H251, and N296 each coordinate substrate. The active-site Proton donor is the E297. The active-site Nucleophile is E430. W472 is a binding site for substrate.

This sequence belongs to the glycosyl hydrolase 5 (cellulase A) family.

The protein resides in the cell outer membrane. It carries out the reaction xyloglucan + H2O = xyloglucan oligosaccharides.. The protein operates within glucan metabolism; xyloglucan degradation. Functionally, catalyzes endohydrolysis of 1,4-beta-D-glucosidic linkages in xyloglucan with retention of the beta-configuration of the glycosyl residues in xyloglucan degradation. Cleaves the backbone of the 3 major types of natural xyloglucans (seed galactoxyloglucan from tamarind kernel, dicot fucogalactoxyloglucan from lettuce leaves, and solanaceous arabinogalactoxyloglucan from tomato fruit), to produce xyloglucan oligosaccharides. This Bacteroides ovatus (strain ATCC 8483 / DSM 1896 / JCM 5824 / BCRC 10623 / CCUG 4943 / NCTC 11153) protein is Xyloglucan-specific endo-beta-1,4-glucanase BoGH5A.